Reading from the N-terminus, the 137-residue chain is Dormancy-associated protein homolog 3 (137 aa).

2 disordered regions span residues 1-55 and 69-137; these read MGLL…DSLP and KPPG…TYGM. Residues 32 to 43 show a composition bias toward polar residues; sequence FRPSSGNDQSEA. Positions 70 to 87 are enriched in low complexity; it reads PPGYQGSSAPASPAGSTP. A Phosphoserine modification is found at Ser81. Positions 88–97 are enriched in pro residues; sequence PLSPFSPPLS. Basic and acidic residues predominate over residues 104–118; the sequence is EPFRFRRRSTSDAFE. Polar residues predominate over residues 127–137; that stretch reads GPRSSPPTYGM.

The protein belongs to the DRM1/ARP family.

The protein is Dormancy-associated protein homolog 3 of Arabidopsis thaliana (Mouse-ear cress).